Consider the following 71-residue polypeptide: DNA-directed RNA polymerases I, II, and III subunit RPABC5 (71 aa).

4 residues coordinate Zn(2+): cysteine 7, cysteine 10, cysteine 44, and cysteine 45.

It belongs to the archaeal Rpo10/eukaryotic RPB10 RNA polymerase subunit family. In terms of assembly, component of the RNA polymerase I (Pol I), RNA polymerase II (Pol II) and RNA polymerase III (Pol III) complexes consisting of at least 13, 12 and 17 subunits, respectively.

It localises to the nucleus. In terms of biological role, DNA-dependent RNA polymerase catalyzes the transcription of DNA into RNA using the four ribonucleoside triphosphates as substrates. Common component of RNA polymerases I, II and III which synthesize ribosomal RNA precursors, mRNA precursors and many functional non-coding RNAs, and a small RNAs, such as 5S rRNA and tRNAs, respectively. Pol II is the central component of the basal RNA polymerase II transcription machinery. Pols are composed of mobile elements that move relative to each other. In Pol II, RBP10 is part of the core element with the central large cleft. This Brassica napus (Rape) protein is DNA-directed RNA polymerases I, II, and III subunit RPABC5.